Consider the following 184-residue polypeptide: Probable chemoreceptor glutamine deamidase CheD (184 aa).

This sequence belongs to the CheD family.

The catalysed reaction is L-glutaminyl-[protein] + H2O = L-glutamyl-[protein] + NH4(+). In terms of biological role, probably deamidates glutamine residues to glutamate on methyl-accepting chemotaxis receptors (MCPs), playing an important role in chemotaxis. In Rhizobium leguminosarum bv. trifolii (strain WSM2304), this protein is Probable chemoreceptor glutamine deamidase CheD.